Here is a 237-residue protein sequence, read N- to C-terminus: Ribosomal RNA small subunit methyltransferase G (237 aa).

S-adenosyl-L-methionine contacts are provided by residues Gly78, Phe83, Ala129 to Glu130, and Arg148.

The protein belongs to the methyltransferase superfamily. RNA methyltransferase RsmG family.

Its subcellular location is the cytoplasm. Its function is as follows. Specifically methylates the N7 position of a guanine in 16S rRNA. The chain is Ribosomal RNA small subunit methyltransferase G from Streptococcus thermophilus (strain CNRZ 1066).